Reading from the N-terminus, the 366-residue chain is MTVTTPDALLAPHDVQHAGADESAAQIRKPRDNNDPRNANRGGGNGKPRRDKRDVHGWVVLDKPIGMTSTQAVAVLKRLFSAKRAGHAGTLDPLASGGLPIAMGEATKTVPFVMDGRKRYRFTVAWGEERDTDDTEGRAVATSPDRPTAEAIRALLPRFTGVIEQVPPQYSAVKIQGERAYDLARDGEVVPLVPRPVEIHELTLVEHGDDGRSVFEAECGKGTYVRALARDMGRLLGCYGHICALRRTVVGPFDESDMIPLEELQALCDRAASGEGSLADALLPVETALDDIPALAVTRADAARLHRGQAVLLRGRDAPHCSGTVYVTVAGRLLALAEVGNGELIPKRVFNLTGLTASSAVRKESI.

A disordered region spans residues 1-55 (MTVTTPDALLAPHDVQHAGADESAAQIRKPRDNNDPRNANRGGGNGKPRRDKRDV). Asp-92 (nucleophile) is an active-site residue.

This sequence belongs to the pseudouridine synthase TruB family. Type 1 subfamily.

The enzyme catalyses uridine(55) in tRNA = pseudouridine(55) in tRNA. Responsible for synthesis of pseudouridine from uracil-55 in the psi GC loop of transfer RNAs. This is tRNA pseudouridine synthase B from Rhodopseudomonas palustris (strain ATCC BAA-98 / CGA009).